Consider the following 760-residue polypeptide: General transcription and DNA repair factor IIH helicase subunit XPD (760 aa).

The region spanning 7 to 283 (GLLVYFPYDY…KETDEQRLRD (277 aa)) is the Helicase ATP-binding domain. 42 to 49 (MPSGTGKT) is a binding site for ATP. The [4Fe-4S] cluster site is built by cysteine 116, cysteine 134, cysteine 155, and cysteine 190. Residues 234–237 (DEAH) carry the DEAH box motif. The segment at 438–637 (MDASLAIKPV…TQSRILKARL (200 aa)) is mediates interaction with MMS19. A Nuclear localization signal motif is present at residues 682–695 (KRFARADKRGKLPR).

It belongs to the helicase family. RAD3/XPD subfamily. In terms of assembly, component of the 7-subunit TFIIH core complex composed of XPB/ERCC3, XPD/ERCC2, GTF2H1, GTF2H2, GTF2H3, GTF2H4 and GTF2H5, which is active in NER. The core complex associates with the 3-subunit CDK-activating kinase (CAK) module composed of CCNH/cyclin H, CDK7 and MNAT1 to form the 10-subunit holoenzyme (holo-TFIIH) active in transcription. The interaction with GTF2H2 results in the stimulation of the 5'--&gt;3' helicase activity. Component of the MMXD complex, which includes CIAO1, ERCC2, CIAO2B, MMS19 and SLC25A5. Interacts with CIAO1 and CIAO2B; the interaction WITH CIAO2B is direct. Interacts with ATF7IP. Interacts directly with MMS19. Part of TBP-based Pol II pre-initiation complex (PIC), in which Pol II core assembles with general transcription factors and other specific initiation factors including GTF2E1, GTF2E2, GTF2F1, GTF2F2, TCEA1, ERCC2, ERCC3, GTF2H2, GTF2H3, GTF2H4, GTF2H5, GTF2A1, GTF2A2, GTF2B and TBP; this large multi-subunit PIC complex mediates DNA unwinding and targets Pol II core to the transcription start site where the first phosphodiester bond forms. It depends on Mg(2+) as a cofactor. The cofactor is [4Fe-4S] cluster. ISGylated.

The protein localises to the nucleus. It localises to the cytoplasm. The protein resides in the cytoskeleton. Its subcellular location is the spindle. It catalyses the reaction Couples ATP hydrolysis with the unwinding of duplex DNA at the replication fork by translocating in the 5'-3' direction. This creates two antiparallel DNA single strands (ssDNA). The leading ssDNA polymer is the template for DNA polymerase III holoenzyme which synthesizes a continuous strand.. The catalysed reaction is ATP + H2O = ADP + phosphate + H(+). ATP-dependent 5'-3' DNA helicase. Component of the general transcription and DNA repair factor IIH (TFIIH) core complex which is involved in general and transcription-coupled nucleotide excision repair (NER) of damaged DNA. When complexed to CDK-activating kinase (CAK), involved in transcription by RNA polymerase II. In NER, TFIIH acts by opening DNA around the lesion to allow the excision of the damaged oligonucleotide and its replacement by a new DNA fragment. The ATP-dependent helicase activity of XPD/ERCC2 is required for DNA opening. In transcription, TFIIH has an essential role in transcription initiation. When the pre-initiation complex (PIC) has been established, TFIIH is required for promoter opening and promoter escape. Phosphorylation of the C-terminal tail (CTD) of the largest subunit of RNA polymerase II by the kinase module CAK controls the initiation of transcription. XPD/ERCC2 acts by forming a bridge between CAK and the core-TFIIH complex. Involved in the regulation of vitamin-D receptor activity. As part of the mitotic spindle-associated MMXD complex it plays a role in chromosome segregation. Might have a role in aging process and could play a causative role in the generation of skin cancers. This chain is General transcription and DNA repair factor IIH helicase subunit XPD, found in Cricetulus griseus (Chinese hamster).